A 1976-amino-acid polypeptide reads, in one-letter code: Protein TIC 214 (1976 aa).

6 helical membrane-spanning segments follow: residues 11–31 (LLLL…YYGF), 64–84 (FIMG…HLAL), 87–107 (PHTL…FFWN), 126–146 (LSIQ…HFVL), 173–193 (FFGW…VLSW), and 221–241 (IFSI…PSPI). Positions 619 to 635 (FEEEEEEEEEDDQEEST) are enriched in acidic residues. Disordered stretches follow at residues 619-642 (FEEE…GIRS) and 830-861 (SSYV…EDKR). Positions 836 to 861 (GAKEKEKIEEEHEEEKGEYKRKEDKR) are enriched in basic and acidic residues. The next 2 membrane-spanning stretches (helical) occupy residues 1054–1074 (IIKI…FFVL) and 1202–1222 (IYMS…QFFL). The segment covering 1633 to 1665 (QKERFHPKPKVESNQKGYLELENRNRDEKERQH) has biased composition (basic and acidic residues). The segment at 1633–1669 (QKERFHPKPKVESNQKGYLELENRNRDEKERQHQGNL) is disordered.

This sequence belongs to the TIC214 family. Part of the Tic complex.

It localises to the plastid. Its subcellular location is the chloroplast inner membrane. Functionally, involved in protein precursor import into chloroplasts. May be part of an intermediate translocation complex acting as a protein-conducting channel at the inner envelope. The chain is Protein TIC 214 from Nymphaea alba (White water-lily).